A 154-amino-acid polypeptide reads, in one-letter code: Protein X (154 aa).

The interval 26-45 (RGRPVSGPLGSLSSSSPSAV) is disordered. The span at 31 to 43 (SGPLGSLSSSSPS) shows a compositional bias: low complexity. Residues 68–117 (PCALRFTSARRMETTVNAHQILPKILHKRTLGLSTMSTTDLEAYFKDCLF) are mitochondrial targeting sequence.

Belongs to the orthohepadnavirus protein X family. In terms of assembly, may form homodimer. May interact with host CEBPA, CFLAR, CREB1, DDB1, E4F1, HBXIP, HSPD1/HSP60, NFKBIA, POLR2E and SMAD4. Interacts with host SMC5-SMC6 complex and induces its degradation. Interacts with host TRPC4AP; leading to prevent ubiquitination of TRPC4AP. Interacts with host PLSCR1; this interaction promotes ubiquitination and degradation of HBx and impairs HBx-mediated cell proliferation. In terms of processing, a fraction may be phosphorylated in insect cells and HepG2 cells, a human hepatoblastoma cell line. Phosphorylated in vitro by host protein kinase C or mitogen-activated protein kinase. N-acetylated in insect cells.

The protein localises to the host cytoplasm. Its subcellular location is the host nucleus. The protein resides in the host mitochondrion. Multifunctional protein that plays a role in silencing host antiviral defenses and promoting viral transcription. Does not seem to be essential for HBV infection. May be directly involved in development of cirrhosis and liver cancer (hepatocellular carcinoma). Most of cytosolic activities involve modulation of cytosolic calcium. The effect on apoptosis is controversial depending on the cell types in which the studies have been conducted. May induce apoptosis by localizing in mitochondria and causing loss of mitochondrial membrane potential. May also modulate apoptosis by binding host CFLAR, a key regulator of the death-inducing signaling complex (DISC). Promotes viral transcription by using the host E3 ubiquitin ligase DDB1 to target the SMC5-SMC6 complex to proteasomal degradation. This host complex would otherwise bind to viral episomal DNA, and prevents its transcription. Moderately stimulates transcription of many different viral and cellular transcription elements. Promoters and enhancers stimulated by HBx contain DNA binding sites for NF-kappa-B, AP-1, AP-2, c-EBP, ATF/CREB, or the calcium-activated factor NF-AT. The polypeptide is Protein X (Hepatitis B virus genotype D subtype ayw (isolate Japan/JYW796/1988) (HBV-D)).